Consider the following 508-residue polypeptide: Steroid 17-alpha-hydroxylase/17,20 lyase (508 aa).

Asparagine 202 provides a ligand contact to substrate. Cysteine 442 serves as a coordination point for heme.

It belongs to the cytochrome P450 family. It depends on heme as a cofactor.

The protein resides in the endoplasmic reticulum membrane. Its subcellular location is the microsome membrane. It catalyses the reaction a C21-steroid + reduced [NADPH--hemoprotein reductase] + O2 = a 17alpha-hydroxy-C21-steroid + oxidized [NADPH--hemoprotein reductase] + H2O + H(+). It carries out the reaction progesterone + reduced [NADPH--hemoprotein reductase] + O2 = 17alpha-hydroxyprogesterone + oxidized [NADPH--hemoprotein reductase] + H2O + H(+). The enzyme catalyses pregnenolone + reduced [NADPH--hemoprotein reductase] + O2 = 17alpha-hydroxypregnenolone + oxidized [NADPH--hemoprotein reductase] + H2O + H(+). The catalysed reaction is 17alpha-hydroxyprogesterone + reduced [NADPH--hemoprotein reductase] + O2 = androst-4-ene-3,17-dione + acetate + oxidized [NADPH--hemoprotein reductase] + H2O + 2 H(+). It catalyses the reaction 17alpha-hydroxyprogesterone + reduced [NADPH--hemoprotein reductase] + O2 = 16alpha,17alpha-dihydroxyprogesterone + oxidized [NADPH--hemoprotein reductase] + H2O + H(+). It carries out the reaction 16alpha,17alpha-dihydroxyprogesterone + reduced [NADPH--hemoprotein reductase] + O2 = 6beta,16alpha,17alpha-trihydroxyprogesterone + oxidized [NADPH--hemoprotein reductase] + H2O + H(+). The enzyme catalyses 17alpha-hydroxypregnenolone + reduced [NADPH--hemoprotein reductase] + O2 = 3beta-hydroxyandrost-5-en-17-one + acetate + oxidized [NADPH--hemoprotein reductase] + H2O + 2 H(+). The catalysed reaction is 16alpha,17alpha-dihydroxypregnenolone + reduced [NADPH--hemoprotein reductase] + O2 = 3beta,16alpha-dihydroxy-androst-5-en-17-one + acetate + oxidized [NADPH--hemoprotein reductase] + H2O + 2 H(+). It catalyses the reaction 3beta-hydroxyandrost-5-en-17-one + reduced [NADPH--hemoprotein reductase] + O2 = 3beta,16alpha-dihydroxy-androst-5-en-17-one + oxidized [NADPH--hemoprotein reductase] + H2O + H(+). It carries out the reaction androst-4-ene-3,17-dione + reduced [NADPH--hemoprotein reductase] + O2 = 16alpha-hydroxyandrost-4-ene-3,17-dione + oxidized [NADPH--hemoprotein reductase] + H2O + H(+). The protein operates within steroid hormone biosynthesis. It participates in steroid biosynthesis; glucocorticoid biosynthesis. Regulated predominantly by intracellular cAMP levels. The 17,20-lyase activity is stimulated by cytochrome b5, which acts as an allosteric effector increasing the Vmax of the lyase activity. A cytochrome P450 monooxygenase involved in corticoid and androgen biosynthesis. Catalyzes 17-alpha hydroxylation of C21 steroids, which is common for both pathways. A second oxidative step, required only for androgen synthesis, involves an acyl-carbon cleavage. The 17-alpha hydroxy intermediates, as part of adrenal glucocorticoids biosynthesis pathway, are precursors of cortisol. Hydroxylates steroid hormones, pregnenolone and progesterone to form 17-alpha hydroxy metabolites, followed by the cleavage of the C17-C20 bond to form C19 steroids, dehydroepiandrosterone (DHEA) and androstenedione. Has 16-alpha hydroxylase activity. Catalyzes 16-alpha hydroxylation of 17-alpha hydroxy pregnenolone, followed by the cleavage of the C17-C20 bond to form 16-alpha-hydroxy DHEA. Also 16-alpha hydroxylates androgens, relevant for estriol synthesis. Mechanistically, uses molecular oxygen inserting one oxygen atom into a substrate, and reducing the second into a water molecule, with two electrons provided by NADPH via cytochrome P450 reductase (CPR; NADPH-ferrihemoprotein reductase). This is Steroid 17-alpha-hydroxylase/17,20 lyase (CYP17A1) from Macaca fascicularis (Crab-eating macaque).